The primary structure comprises 446 residues: Na(+)-translocating NADH-quinone reductase subunit A (446 aa).

It belongs to the NqrA family. Composed of six subunits; NqrA, NqrB, NqrC, NqrD, NqrE and NqrF.

The catalysed reaction is a ubiquinone + n Na(+)(in) + NADH + H(+) = a ubiquinol + n Na(+)(out) + NAD(+). Its function is as follows. NQR complex catalyzes the reduction of ubiquinone-1 to ubiquinol by two successive reactions, coupled with the transport of Na(+) ions from the cytoplasm to the periplasm. NqrA to NqrE are probably involved in the second step, the conversion of ubisemiquinone to ubiquinol. The sequence is that of Na(+)-translocating NADH-quinone reductase subunit A from Vibrio campbellii (strain ATCC BAA-1116).